Here is a 1644-residue protein sequence, read N- to C-terminus: Terminal uridylyltransferase 4 (1644 aa).

Disordered stretches follow at residues 31-63 (NQTL…QNDI), 96-168 (CKAK…SLLL), and 205-257 (ALQN…EMDY). A compositionally biased stretch (basic and acidic residues) spans 36–46 (ARNDKSVKEIE). The residue at position 104 (Ser-104) is a Phosphoserine. Residues 112 to 125 (TISQAKSEKATSLQ) are compositionally biased toward polar residues. Ser-134 and Ser-156 each carry phosphoserine. A compositionally biased stretch (polar residues) spans 206 to 222 (LQNSPRSQKQQTCTDNT). The span at 238–252 (DLSKMKNDESNKENS) shows a compositional bias: basic and acidic residues. The interval 253 to 333 (SEMDYLENAT…KEKRHKKNIL (81 aa)) is required for interaction with LIN28A and pre-let-7 RNA. The Zn(2+) site is built by Cys-306, Cys-309, His-322, and His-328. Residues 579–617 (EKNSIAEENKAKADQPKDDTKKTETDNQSNAMKEKHGKS) are disordered. Positions 582–603 (SIAEENKAKADQPKDDTKKTET) are enriched in basic and acidic residues. In terms of domain architecture, PAP-associated 1 spans 628 to 678 (SLGQLWLELLKFYTLDFALEEYVICVRIQDILTRENKNWPKRRIAIEDPFS). The interval 794-816 (GQDSSSLSTSKSSEIEPKLDKKQ) is disordered. Positions 806–816 (SEIEPKLDKKQ) are enriched in basic and acidic residues. Positions 901–1634 (DKFILTSGKP…CATRRCRERC (734 aa)) are sufficient for monouridylation activity. The CCHC-type 1 zinc finger occupies 913–930 (IVCSICKKDGHSKNDCPE). UTP contacts are provided by residues 998–1001 (SSKN), 1008–1011 (SDLD), Asn-1081, Lys-1103, 1121–1125 (SYAYI), and His-1237. 2 residues coordinate Mg(2+): Asp-1009 and Asp-1011. The 54-residue stretch at 1184 to 1237 (SLGELWLGLLRFYTEEFDFKEYVISIRQKKLLTTFEKQWTSKCIAIEDPFDLNH) folds into the PAP-associated 2 domain. A CCHC-type 2 zinc finger spans residues 1293–1310 (RCCRVCGKIGHYMKDCPK). A disordered region spans residues 1321 to 1348 (KDSEEEKEGNEEEKDSRDVLDPRDLHDT). A compositionally biased stretch (basic and acidic residues) spans 1334-1348 (KDSRDVLDPRDLHDT). The segment at 1357-1374 (LRCFICGDAGHVRRECPE) adopts a CCHC-type 3 zinc-finger fold. A compositionally biased stretch (low complexity) spans 1401-1426 (AGSAQQQGDQSIRTRQSSECSESPSY). Residues 1401–1482 (AGSAQQQGDQ…LYNFPQSPPA (82 aa)) form a disordered region. Over residues 1441–1452 (AAITQPSSQPGS) the composition is skewed to polar residues. The span at 1453-1470 (QPKLGPPQQGAQPPHQVQ) shows a compositional bias: low complexity. Arg-1624 is modified (omega-N-methylarginine).

The protein belongs to the DNA polymerase type-B-like family. Interacts with LIN28A in the presence of pre-let-7 RNA. Interacts with T2BP. Interacts with MOV10; the interaction is RNA-dependent. It depends on Mg(2+) as a cofactor. Requires Mn(2+) as cofactor.

It is found in the nucleus. The protein localises to the cytoplasm. The protein resides in the cytoplasmic ribonucleoprotein granule. The catalysed reaction is RNA(n) + UTP = RNA(n)-3'-uridine ribonucleotide + diphosphate. Uridylyltransferase that mediates the terminal uridylation of mRNAs with short (less than 25 nucleotides) poly(A) tails, hence facilitating global mRNA decay. Essential for both oocyte maturation and fertility. Through 3' terminal uridylation of mRNA, sculpts, with TUT7, the maternal transcriptome by eliminating transcripts during oocyte growth. Involved in microRNA (miRNA)-induced gene silencing through uridylation of deadenylated miRNA targets. Also functions as an integral regulator of microRNA biogenesis using 3 different uridylation mechanisms. Acts as a suppressor of miRNA biogenesis by mediating the terminal uridylation of some miRNA precursors, including that of let-7 (pre-let-7), miR107, miR-143 and miR-200c. Uridylated miRNAs are not processed by Dicer and undergo degradation. Degradation of pre-let-7 contributes to the maintenance of embryonic stem (ES) cell pluripotency. Also catalyzes the 3' uridylation of miR-26A, a miRNA that targets IL6 transcript. This abrogates the silencing of IL6 transcript, hence promoting cytokine expression. In the absence of LIN28A, TUT7 and TUT4 monouridylate group II pre-miRNAs, which includes most of pre-let7 members, that shapes an optimal 3' end overhang for efficient processing. Adds oligo-U tails to truncated pre-miRNAS with a 5' overhang which may promote rapid degradation of non-functional pre-miRNA species. May also suppress Toll-like receptor-induced NF-kappa-B activation via binding to T2BP. Does not play a role in replication-dependent histone mRNA degradation. Due to functional redundancy between TUT4 and TUT7, the identification of the specific role of each of these proteins is difficult. TUT4 and TUT7 restrict retrotransposition of long interspersed element-1 (LINE-1) in cooperation with MOV10 counteracting the RNA chaperonne activity of L1RE1. TUT7 uridylates LINE-1 mRNAs in the cytoplasm which inhibits initiation of reverse transcription once in the nucleus, whereas uridylation by TUT4 destabilizes mRNAs in cytoplasmic ribonucleoprotein granules. This chain is Terminal uridylyltransferase 4, found in Homo sapiens (Human).